The sequence spans 618 residues: UvrABC system protein C (618 aa).

One can recognise a GIY-YIG domain in the interval 20-98 (TAPGVYRMYA…IKSLSPRYNV (79 aa)). A UVR domain is found at 207 to 242 (DQLGEEIMQSMQQASEALEFERAARLRDLLSSLRSM).

The protein belongs to the UvrC family. Interacts with UvrB in an incision complex.

It localises to the cytoplasm. Functionally, the UvrABC repair system catalyzes the recognition and processing of DNA lesions. UvrC both incises the 5' and 3' sides of the lesion. The N-terminal half is responsible for the 3' incision and the C-terminal half is responsible for the 5' incision. This chain is UvrABC system protein C, found in Xanthomonas oryzae pv. oryzae (strain MAFF 311018).